Here is a 213-residue protein sequence, read N- to C-terminus: Thiamine-phosphate synthase (213 aa).

4-amino-2-methyl-5-(diphosphooxymethyl)pyrimidine is bound by residues 41–45 and asparagine 73; that span reads QFRVK. Mg(2+) contacts are provided by aspartate 74 and aspartate 93. 4-amino-2-methyl-5-(diphosphooxymethyl)pyrimidine is bound at residue threonine 112. Position 139–141 (139–141) interacts with 2-[(2R,5Z)-2-carboxy-4-methylthiazol-5(2H)-ylidene]ethyl phosphate; that stretch reads SAT. Residue lysine 142 coordinates 4-amino-2-methyl-5-(diphosphooxymethyl)pyrimidine. Glycine 171 lines the 2-[(2R,5Z)-2-carboxy-4-methylthiazol-5(2H)-ylidene]ethyl phosphate pocket.

It belongs to the thiamine-phosphate synthase family. Requires Mg(2+) as cofactor.

It catalyses the reaction 2-[(2R,5Z)-2-carboxy-4-methylthiazol-5(2H)-ylidene]ethyl phosphate + 4-amino-2-methyl-5-(diphosphooxymethyl)pyrimidine + 2 H(+) = thiamine phosphate + CO2 + diphosphate. It carries out the reaction 2-(2-carboxy-4-methylthiazol-5-yl)ethyl phosphate + 4-amino-2-methyl-5-(diphosphooxymethyl)pyrimidine + 2 H(+) = thiamine phosphate + CO2 + diphosphate. The catalysed reaction is 4-methyl-5-(2-phosphooxyethyl)-thiazole + 4-amino-2-methyl-5-(diphosphooxymethyl)pyrimidine + H(+) = thiamine phosphate + diphosphate. It functions in the pathway cofactor biosynthesis; thiamine diphosphate biosynthesis; thiamine phosphate from 4-amino-2-methyl-5-diphosphomethylpyrimidine and 4-methyl-5-(2-phosphoethyl)-thiazole: step 1/1. Condenses 4-methyl-5-(beta-hydroxyethyl)thiazole monophosphate (THZ-P) and 2-methyl-4-amino-5-hydroxymethyl pyrimidine pyrophosphate (HMP-PP) to form thiamine monophosphate (TMP). This Erythrobacter litoralis (strain HTCC2594) protein is Thiamine-phosphate synthase.